Reading from the N-terminus, the 730-residue chain is Rap1 GTPase-activating protein 2 (730 aa).

Ser-7 is modified (phosphoserine; by PKG/PRKG1; in vitro). Residues 32-53 are disordered; that stretch reads ANSSDATLPDRPLSPPLTAPPT. Ser-45 carries the post-translational modification Phosphoserine. Thr-49 carries the post-translational modification Phosphothreonine. Residues 248–464 enclose the Rap-GAP domain; sequence IVSYDEHEVN…RTRAALLDNL (217 aa). Ser-507 is subject to Phosphoserine. A disordered region spans residues 509-533; the sequence is ETMVGGQKKSHSGGIPGSLSGGISH. Phosphoserine occurs at positions 544, 558, 564, 612, and 613. The disordered stretch occupies residues 552-730; the sequence is VKNQSRSPIK…LSHASSGAGH (179 aa). Over residues 585 to 613 the composition is skewed to polar residues; that stretch reads DSTSSTPKTPDGGHSSQEIKSETSSNPSS. Residues 618-631 are compositionally biased toward basic and acidic residues; that stretch reads PNKEKPFMKLKENG. Over residues 635-647 the composition is skewed to low complexity; that stretch reads SRSSSSTSSVSST. Positions 661–670 are enriched in polar residues; it reads GSQPSTTSPF. Residues 678–687 are compositionally biased toward low complexity; that stretch reads SPSPSSESPS. The segment covering 699–712 has biased composition (polar residues); sequence RSPTDAKSRNSPRS.

In vitro phosphorylated by cGMP-dependent protein kinase 1 (cGKI) at Ser-7; the phosphorylation probably does not regulate GAP activity. Isoform 1 and isoform 2 are expressed in platelets with isoform 2 being the predominant form. Expressed in lymphocytes, heart, testis and pancreas.

Its subcellular location is the cytoplasm. It is found in the perinuclear region. Functionally, GTPase activator for the nuclear Ras-related regulatory protein RAP-1A (KREV-1), converting it to the putatively inactive GDP-bound state. The chain is Rap1 GTPase-activating protein 2 (RAP1GAP2) from Homo sapiens (Human).